Here is a 373-residue protein sequence, read N- to C-terminus: Arfaptin-1 (373 aa).

Positions 1–47 are disordered; sequence MAQESPKNSAAEIPVTSNGEVDDAHEHGYNRDLKHSLPSGLGLSETQ. Alanine 2 carries the N-acetylalanine modification. Serine 5 is subject to Phosphoserine. The span at 22 to 35 shows a compositional bias: basic and acidic residues; the sequence is DDAHEHGYNRDLKH. A phosphoserine mark is found at serine 36, serine 39, serine 69, serine 79, and serine 132. The AH domain occupies 153-353; it reads TVDLELEAQI…NQKQLELTLK (201 aa). Position 361 is a phosphothreonine (threonine 361).

Forms homodimers or heterodimers with ARFIP2. Interacts with non-myristoylated GTP-bound ARF3, but not to GDP-bound ARF3. Interacts with ARF1. Binds with lower affinity to ARF5 and with very little affinity to ARF6. Interacts with ARL1. Interacts with ATG9A. In terms of processing, phosphorylated by PRKD1; phosphorylation delocalizes ARFIP1 from the Golgi and disrupts its ability to inhibit the activity of ADP-ribosylation factor, an important component of the vesicle scission machinery.

Its subcellular location is the golgi apparatus. The protein resides in the trans-Golgi network membrane. Functionally, plays a role in controlling biogenesis of secretory granules at the trans-Golgi network. Mechanistically, binds ARF-GTP at the neck of a growing secretory granule precursor and forms a protective scaffold. Once the granule precursor has been completely loaded, active PRKD1 phosphorylates ARFIP1 and releases it from ARFs. In turn, ARFs induce fission. Through this mechanism, ensures proper secretory granule formation at the Golgi of pancreatic beta cells. In Mus musculus (Mouse), this protein is Arfaptin-1.